The following is a 192-amino-acid chain: Small ribosomal subunit protein uS5 (192 aa).

Residues 22 to 85 (LVDKLVTINR…DRAKRAMIRV (64 aa)) form the S5 DRBM domain.

The protein belongs to the universal ribosomal protein uS5 family. In terms of assembly, part of the 30S ribosomal subunit. Contacts proteins S4 and S8.

In terms of biological role, with S4 and S12 plays an important role in translational accuracy. Its function is as follows. Located at the back of the 30S subunit body where it stabilizes the conformation of the head with respect to the body. This chain is Small ribosomal subunit protein uS5, found in Gluconacetobacter diazotrophicus (strain ATCC 49037 / DSM 5601 / CCUG 37298 / CIP 103539 / LMG 7603 / PAl5).